Consider the following 433-residue polypeptide: Adenosylhomocysteinase B (433 aa).

Substrate is bound by residues T57, D132, E157, K187, and D191. Positions 184 to 351 (SVTKSKFDNL…EGRLVNLGCA (168 aa)) are NAD binding.

The protein belongs to the adenosylhomocysteinase family. In terms of assembly, homotetramer. Requires NAD(+) as cofactor.

It is found in the cytoplasm. The catalysed reaction is S-adenosyl-L-homocysteine + H2O = L-homocysteine + adenosine. It functions in the pathway amino-acid biosynthesis; L-homocysteine biosynthesis; L-homocysteine from S-adenosyl-L-homocysteine: step 1/1. In terms of biological role, catalyzes the hydrolysis of S-adenosyl-L-homocysteine to form adenosine and homocysteine. Binds copper ions. The chain is Adenosylhomocysteinase B (ahcy-b) from Xenopus laevis (African clawed frog).